Consider the following 308-residue polypeptide: Bifunctional protein FolD (308 aa).

NADP(+)-binding positions include Gly171–Ser173, Ser198, and Ile239.

The protein belongs to the tetrahydrofolate dehydrogenase/cyclohydrolase family. Homodimer.

The enzyme catalyses (6R)-5,10-methylene-5,6,7,8-tetrahydrofolate + NADP(+) = (6R)-5,10-methenyltetrahydrofolate + NADPH. It catalyses the reaction (6R)-5,10-methenyltetrahydrofolate + H2O = (6R)-10-formyltetrahydrofolate + H(+). It functions in the pathway one-carbon metabolism; tetrahydrofolate interconversion. Its function is as follows. Catalyzes the oxidation of 5,10-methylenetetrahydrofolate to 5,10-methenyltetrahydrofolate and then the hydrolysis of 5,10-methenyltetrahydrofolate to 10-formyltetrahydrofolate. The polypeptide is Bifunctional protein FolD (Borreliella burgdorferi (strain ATCC 35210 / DSM 4680 / CIP 102532 / B31) (Borrelia burgdorferi)).